Reading from the N-terminus, the 134-residue chain is Profilin-3 (134 aa).

C13 and C118 form a disulfide bridge. The Involved in PIP2 interaction signature appears at 84 to 100; it reads AVIRGKKGSGGITIKKT. T114 bears the Phosphothreonine mark.

It belongs to the profilin family. Occurs in many kinds of cells as a complex with monomeric actin in a 1:1 ratio. Phosphorylated by MAP kinases.

Its subcellular location is the cytoplasm. It is found in the cytoskeleton. Its function is as follows. Binds to actin and affects the structure of the cytoskeleton. At high concentrations, profilin prevents the polymerization of actin, whereas it enhances it at low concentrations. This is Profilin-3 from Olea europaea (Common olive).